A 232-amino-acid polypeptide reads, in one-letter code: Phosphatidylserine decarboxylase proenzyme (232 aa).

The active-site Schiff-base intermediate with substrate; via pyruvic acid is the Ser-190. A Pyruvic acid (Ser); by autocatalysis modification is found at Ser-190.

It belongs to the phosphatidylserine decarboxylase family. PSD-A subfamily. In terms of assembly, heterodimer of a large membrane-associated beta subunit and a small pyruvoyl-containing alpha subunit. Requires pyruvate as cofactor. Is synthesized initially as an inactive proenzyme. Formation of the active enzyme involves a self-maturation process in which the active site pyruvoyl group is generated from an internal serine residue via an autocatalytic post-translational modification. Two non-identical subunits are generated from the proenzyme in this reaction, and the pyruvate is formed at the N-terminus of the alpha chain, which is derived from the carboxyl end of the proenzyme. The post-translation cleavage follows an unusual pathway, termed non-hydrolytic serinolysis, in which the side chain hydroxyl group of the serine supplies its oxygen atom to form the C-terminus of the beta chain, while the remainder of the serine residue undergoes an oxidative deamination to produce ammonia and the pyruvoyl prosthetic group on the alpha chain.

The protein resides in the cell membrane. It catalyses the reaction a 1,2-diacyl-sn-glycero-3-phospho-L-serine + H(+) = a 1,2-diacyl-sn-glycero-3-phosphoethanolamine + CO2. Its pathway is phospholipid metabolism; phosphatidylethanolamine biosynthesis; phosphatidylethanolamine from CDP-diacylglycerol: step 2/2. Functionally, catalyzes the formation of phosphatidylethanolamine (PtdEtn) from phosphatidylserine (PtdSer). The sequence is that of Phosphatidylserine decarboxylase proenzyme from Mesorhizobium japonicum (strain LMG 29417 / CECT 9101 / MAFF 303099) (Mesorhizobium loti (strain MAFF 303099)).